Consider the following 1306-residue polypeptide: DNA-directed RNA polymerase subunit beta' (1306 aa).

Residues Cys214, Cys285, Cys292, and Cys295 each contribute to the Zn(2+) site. 2 disordered regions span residues 1234–1263 (LDNG…PNRL) and 1281–1306 (IARA…DDDK). The segment covering 1247–1259 (QGERDNNNSDKKP) has biased composition (basic and acidic residues).

Belongs to the RNA polymerase beta' chain family. RpoC2 subfamily. As to quaternary structure, in cyanobacteria the RNAP catalytic core is composed of 2 alpha, 1 beta, 1 beta', 1 gamma and 1 omega subunit. When a sigma factor is associated with the core the holoenzyme is formed, which can initiate transcription. Zn(2+) is required as a cofactor.

The enzyme catalyses RNA(n) + a ribonucleoside 5'-triphosphate = RNA(n+1) + diphosphate. Functionally, DNA-dependent RNA polymerase catalyzes the transcription of DNA into RNA using the four ribonucleoside triphosphates as substrates. In Crocosphaera subtropica (strain ATCC 51142 / BH68) (Cyanothece sp. (strain ATCC 51142)), this protein is DNA-directed RNA polymerase subunit beta'.